We begin with the raw amino-acid sequence, 55 residues long: MAKAVTVKIKLVSTADTGYFYVTKKNSRTQTDKLSFKKYDPVARKHVEFKEAKIK.

Belongs to the bacterial ribosomal protein bL33 family.

In Methylobacterium sp. (strain 4-46), this protein is Large ribosomal subunit protein bL33.